We begin with the raw amino-acid sequence, 255 residues long: MIFQTIRQQQPLIHCITNYVVANFQANGLLALGASPVMADDSHEVEEMVAIAEALLINIGTLNDRTKEAMLLAGKKANTLGIPVILDPVGAGATVYRKETVHLLLTDIQFAVIRCNKGELAALVNVEWQQKGVDSGDGFIDIETEATLLAQRYNCIVIVTGEHDFMTDGVQSQWITGGNSQMTEVTGTGCLLSAICGAAYSSGEDPYSQLVETLTYYKKAAELASAFTEDIGDIQIALLNALHRLSKEGEASCIL.

M38 serves as a coordination point for substrate. R114 and T160 together coordinate ATP. G187 lines the substrate pocket.

The protein belongs to the Thz kinase family. Requires Mg(2+) as cofactor.

It carries out the reaction 5-(2-hydroxyethyl)-4-methylthiazole + ATP = 4-methyl-5-(2-phosphooxyethyl)-thiazole + ADP + H(+). The protein operates within cofactor biosynthesis; thiamine diphosphate biosynthesis; 4-methyl-5-(2-phosphoethyl)-thiazole from 5-(2-hydroxyethyl)-4-methylthiazole: step 1/1. Catalyzes the phosphorylation of the hydroxyl group of 4-methyl-5-beta-hydroxyethylthiazole (THZ). The sequence is that of Hydroxyethylthiazole kinase from Lysinibacillus sphaericus (strain C3-41).